Consider the following 265-residue polypeptide: MDQTVSENLIQVKKESGGIAVITINRPKSLNSLTRAMMVDLAKAFKDMDSDESVQVVIFTGSGRSFCSGVDLTAAESVFKGDVKDPETDPVVQMERLRKPIIGAINGFAITAGFELALACDILVASRGAKFMDTHARFGIFPSWGLSQKLSRIIGANKAREVSLTSMPLTADVAGKLGFVNHVVEEGEALKKAREIAEAIIKNEQGMVLRIKSVINDGLKLDLGHALTLEKERAHAYYSGMTKEQFRKMQEFIAGRGSKKPSSKL.

The residue at position 1 (Met-1) is an N-acetylmethionine. Residues 68–72 and Ala-112 each bind substrate; that span reads SGVDL. A Microbody targeting signal motif is present at residues 263–265; it reads SKL.

It belongs to the enoyl-CoA hydratase/isomerase family.

The protein resides in the peroxisome. It carries out the reaction a (3S)-3-hydroxyacyl-CoA = a (2E)-enoyl-CoA + H2O. The catalysed reaction is a 4-saturated-(3S)-3-hydroxyacyl-CoA = a (3E)-enoyl-CoA + H2O. The protein operates within lipid metabolism; fatty acid beta-oxidation. Straight-chain enoyl-CoA thioesters from C4 up to at least C16 are processed, although with decreasing catalytic rate. The chain is Probable enoyl-CoA hydratase 1, peroxisomal from Arabidopsis thaliana (Mouse-ear cress).